A 200-amino-acid chain; its full sequence is Pyridoxal 5'-phosphate synthase subunit PdxT (200 aa).

46–48 (GES) contributes to the L-glutamine binding site. Cys78 serves as the catalytic Nucleophile. L-glutamine contacts are provided by residues Arg107 and 138–139 (IR). Residues His175 and Glu177 each act as charge relay system in the active site.

It belongs to the glutaminase PdxT/SNO family. In terms of assembly, in the presence of PdxS, forms a dodecamer of heterodimers. Only shows activity in the heterodimer.

The enzyme catalyses aldehydo-D-ribose 5-phosphate + D-glyceraldehyde 3-phosphate + L-glutamine = pyridoxal 5'-phosphate + L-glutamate + phosphate + 3 H2O + H(+). It catalyses the reaction L-glutamine + H2O = L-glutamate + NH4(+). The protein operates within cofactor biosynthesis; pyridoxal 5'-phosphate biosynthesis. Its function is as follows. Catalyzes the hydrolysis of glutamine to glutamate and ammonia as part of the biosynthesis of pyridoxal 5'-phosphate. The resulting ammonia molecule is channeled to the active site of PdxS. This is Pyridoxal 5'-phosphate synthase subunit PdxT from Corynebacterium glutamicum (strain R).